The primary structure comprises 419 residues: Fumarylacetoacetase (419 aa).

N-acetylserine is present on serine 2. The residue at position 92 (serine 92) is a Phosphoserine. Aspartate 126 lines the Ca(2+) pocket. Tyrosine 128 contributes to the substrate binding site. The Proton acceptor role is filled by histidine 133. Arginine 142 is a binding site for substrate. Ca(2+) contacts are provided by glutamate 199, glutamate 201, and aspartate 233. Mg(2+) is bound at residue aspartate 233. Substrate-binding residues include glutamine 240 and tyrosine 244. 2 residues coordinate Mg(2+): lysine 253 and threonine 257. Serine 309 is modified (phosphoserine). Threonine 350 lines the substrate pocket. Phosphotyrosine is present on tyrosine 395.

It belongs to the FAH family. Homodimer. Requires Ca(2+) as cofactor. It depends on Mg(2+) as a cofactor. In terms of tissue distribution, mainly expressed in liver and kidney. Lower levels are also detected in many other tissues.

It catalyses the reaction 4-fumarylacetoacetate + H2O = acetoacetate + fumarate + H(+). It participates in amino-acid degradation; L-phenylalanine degradation; acetoacetate and fumarate from L-phenylalanine: step 6/6. This chain is Fumarylacetoacetase (FAH), found in Homo sapiens (Human).